A 227-amino-acid chain; its full sequence is PKHD-type hydroxylase Bphy_5374 (227 aa).

The 101-residue stretch at 79-179 folds into the Fe2OG dioxygenase domain; the sequence is KVYPPLFNRY…RVASFFWVQS (101 aa). Fe cation is bound by residues His-97, Asp-99, and His-160. Position 170 (Arg-170) interacts with 2-oxoglutarate.

It depends on Fe(2+) as a cofactor. Requires L-ascorbate as cofactor.

This is PKHD-type hydroxylase Bphy_5374 from Paraburkholderia phymatum (strain DSM 17167 / CIP 108236 / LMG 21445 / STM815) (Burkholderia phymatum).